A 99-amino-acid polypeptide reads, in one-letter code: Small ribosomal subunit protein bS20 (99 aa).

It belongs to the bacterial ribosomal protein bS20 family.

Functionally, binds directly to 16S ribosomal RNA. The sequence is that of Small ribosomal subunit protein bS20 from Cyanothece sp. (strain PCC 7425 / ATCC 29141).